A 95-amino-acid chain; its full sequence is Aspartyl/glutamyl-tRNA(Asn/Gln) amidotransferase subunit C (95 aa).

It belongs to the GatC family. As to quaternary structure, heterotrimer of A, B and C subunits.

It carries out the reaction L-glutamyl-tRNA(Gln) + L-glutamine + ATP + H2O = L-glutaminyl-tRNA(Gln) + L-glutamate + ADP + phosphate + H(+). It catalyses the reaction L-aspartyl-tRNA(Asn) + L-glutamine + ATP + H2O = L-asparaginyl-tRNA(Asn) + L-glutamate + ADP + phosphate + 2 H(+). Its function is as follows. Allows the formation of correctly charged Asn-tRNA(Asn) or Gln-tRNA(Gln) through the transamidation of misacylated Asp-tRNA(Asn) or Glu-tRNA(Gln) in organisms which lack either or both of asparaginyl-tRNA or glutaminyl-tRNA synthetases. The reaction takes place in the presence of glutamine and ATP through an activated phospho-Asp-tRNA(Asn) or phospho-Glu-tRNA(Gln). The protein is Aspartyl/glutamyl-tRNA(Asn/Gln) amidotransferase subunit C of Syntrophus aciditrophicus (strain SB).